The chain runs to 107 residues: Large ribosomal subunit protein uL24 (107 aa).

Belongs to the universal ribosomal protein uL24 family. Part of the 50S ribosomal subunit.

Functionally, one of two assembly initiator proteins, it binds directly to the 5'-end of the 23S rRNA, where it nucleates assembly of the 50S subunit. In terms of biological role, one of the proteins that surrounds the polypeptide exit tunnel on the outside of the subunit. This is Large ribosomal subunit protein uL24 from Neisseria gonorrhoeae (strain ATCC 700825 / FA 1090).